The sequence spans 795 residues: Phenylalanine--tRNA ligase beta subunit (795 aa).

The region spanning 39 to 148 (KSEFHGVVVG…KETLVGINVY (110 aa)) is the tRNA-binding domain. Residues 400-475 (HKNNTIRLHH…RIYEYNNVHL (76 aa)) enclose the B5 domain. 3 residues coordinate Mg(2+): aspartate 453, aspartate 459, and aspartate 463. The FDX-ACB domain occupies 701–794 (SKFPTVRRDI…LQKKFQAVLR (94 aa)).

It belongs to the phenylalanyl-tRNA synthetase beta subunit family. Type 1 subfamily. In terms of assembly, tetramer of two alpha and two beta subunits. It depends on Mg(2+) as a cofactor.

Its subcellular location is the cytoplasm. It carries out the reaction tRNA(Phe) + L-phenylalanine + ATP = L-phenylalanyl-tRNA(Phe) + AMP + diphosphate + H(+). This Buchnera aphidicola subsp. Acyrthosiphon pisum (strain APS) (Acyrthosiphon pisum symbiotic bacterium) protein is Phenylalanine--tRNA ligase beta subunit (pheT).